Here is a 246-residue protein sequence, read N- to C-terminus: ATP synthase subunit a (246 aa).

A run of 5 helical transmembrane segments spans residues 34–54 (GQTMITTWVVMLLLIGLTFIG), 92–112 (WVPLIGTIFLFVLFANWLGQL), 130–150 (DINTTVALSLIALVSYIYAGL), 155–175 (FGYFKHYFESPILAAVWVLEF), and 196–216 (VVAVLILLVPILVPVPLMILF).

It belongs to the ATPase A chain family. As to quaternary structure, F-type ATPases have 2 components, CF(1) - the catalytic core - and CF(0) - the membrane proton channel. CF(1) has five subunits: alpha(3), beta(3), gamma(1), delta(1), epsilon(1). CF(0) has four main subunits: a, b, b' and c.

The protein localises to the cell inner membrane. Functionally, key component of the proton channel; it plays a direct role in the translocation of protons across the membrane. This is ATP synthase subunit a from Gloeobacter violaceus (strain ATCC 29082 / PCC 7421).